Consider the following 267-residue polypeptide: Mediator of RNA polymerase II transcription subunit 8 (267 aa).

Coiled-coil stretches lie at residues 2–27 (QQRE…KGSL) and 118–163 (VEEQ…EDRD). Residues 156 to 165 (NNPREDRDSE) show a composition bias toward basic and acidic residues. 2 disordered regions span residues 156–180 (NNPR…NPAD) and 227–267 (ASGH…PYNR). Residues 166–180 (TSALRQNKPSFNPAD) show a composition bias toward polar residues. Residues 236 to 247 (GPVAPQQPGQPG) are compositionally biased toward low complexity.

The protein belongs to the Mediator complex subunit 8 family. In terms of assembly, component of the Mediator complex. May be part of a multisubunit E3 ubiquitin-protein ligase complex.

It localises to the nucleus. It participates in protein modification; protein ubiquitination. Functionally, component of the Mediator complex, a coactivator involved in the regulated transcription of nearly all RNA polymerase II-dependent genes. Mediator functions as a bridge to convey information from gene-specific regulatory proteins to the basal RNA polymerase II transcription machinery. Mediator is recruited to promoters by direct interactions with regulatory proteins and serves as a scaffold for the assembly of a functional preinitiation complex with RNA polymerase II and the general transcription factors. May play a role as a target recruitment subunit in E3 ubiquitin-protein ligase complexes and thus in ubiquitination and subsequent proteasomal degradation of target proteins. The polypeptide is Mediator of RNA polymerase II transcription subunit 8 (med8) (Danio rerio (Zebrafish)).